The sequence spans 397 residues: Staphylopine export protein (397 aa).

Helical transmembrane passes span 12–32 (LYILTLMFFSANAILNVFIPL), 38–58 (GATNTVIGIVMGAYMLTAMVF), 77–97 (IILIINAIALIIYGFTGLEGY), 102–122 (VMQGVCTAFFSMSLQLGIIDA), 134–154 (LYSLFSTIPNLIGPLVAVGIW), 158–178 (NISLFAIVIIFIALTTTFFGY), 217–237 (GIIMIVASIVFGAVSTFVPLY), 239–259 (VSLGFANAGIFLTIQAIAVVA), 285–305 (LLVIASFVVAFGPQVGAIIFY), 309–329 (ILIGMTQAMVYPTLTSYLSFV), 337–357 (MLLGLFIACADLGISLGGALM), and 363–383 (LVGFKWMYLICGMLVIVIMIM).

This sequence belongs to the major facilitator superfamily.

It localises to the cell membrane. In terms of biological role, involved in the export of the metallophore staphylopine. The chain is Staphylopine export protein from Staphylococcus aureus (strain Mu50 / ATCC 700699).